The following is a 153-amino-acid chain: L-alanine exporter AlaE (153 aa).

4 consecutive transmembrane segments (helical) span residues 16–36 (VAMV…LSEM), 42–62 (LSSR…YGLY), 86–106 (LFAY…AIGA), and 114–134 (AVGS…YFLE).

The protein belongs to the AlaE exporter family.

Its subcellular location is the cell inner membrane. In terms of biological role, exports L-alanine. The chain is L-alanine exporter AlaE from Musicola paradisiaca (strain Ech703) (Dickeya paradisiaca).